The chain runs to 341 residues: NADH-ubiquinone oxidoreductase chain 2 (341 aa).

Transmembrane regions (helical) follow at residues 8 to 28 (IFFI…SWLG), 61 to 81 (FLTQ…MMMF), 95 to 117 (LLIL…FPGV), 145 to 165 (LNIN…ALGG), 195 to 215 (LLWL…ILMF), 238 to 258 (FFMF…GFLP), 266 to 286 (LVEM…LITL), and 320 to 340 (ILTM…IYLI).

The protein belongs to the complex I subunit 2 family.

Its subcellular location is the mitochondrion inner membrane. It catalyses the reaction a ubiquinone + NADH + 5 H(+)(in) = a ubiquinol + NAD(+) + 4 H(+)(out). In terms of biological role, core subunit of the mitochondrial membrane respiratory chain NADH dehydrogenase (Complex I) that is believed to belong to the minimal assembly required for catalysis. Complex I functions in the transfer of electrons from NADH to the respiratory chain. The immediate electron acceptor for the enzyme is believed to be ubiquinone. The sequence is that of NADH-ubiquinone oxidoreductase chain 2 from Aedes aegypti (Yellowfever mosquito).